A 308-amino-acid chain; its full sequence is Pseudouridine-5'-phosphate glycosidase (308 aa).

Glutamate 26 serves as the catalytic Proton donor. The substrate site is built by lysine 87 and valine 107. Residue aspartate 139 participates in Mn(2+) binding. 141–143 (SAD) is a binding site for substrate. Residue lysine 160 is the Nucleophile of the active site.

It belongs to the pseudouridine-5'-phosphate glycosidase family. In terms of assembly, homotrimer. Mn(2+) is required as a cofactor.

It catalyses the reaction D-ribose 5-phosphate + uracil = psi-UMP + H2O. Functionally, catalyzes the reversible cleavage of pseudouridine 5'-phosphate (PsiMP) to ribose 5-phosphate and uracil. Functions biologically in the cleavage direction, as part of a pseudouridine degradation pathway. The protein is Pseudouridine-5'-phosphate glycosidase of Legionella pneumophila subsp. pneumophila (strain Philadelphia 1 / ATCC 33152 / DSM 7513).